The chain runs to 72 residues: DNA-directed RNA polymerase subunit omega (72 aa).

Belongs to the RNA polymerase subunit omega family. As to quaternary structure, the RNAP catalytic core consists of 2 alpha, 1 beta, 1 beta' and 1 omega subunit. When a sigma factor is associated with the core the holoenzyme is formed, which can initiate transcription.

The enzyme catalyses RNA(n) + a ribonucleoside 5'-triphosphate = RNA(n+1) + diphosphate. Its function is as follows. Promotes RNA polymerase assembly. Latches the N- and C-terminal regions of the beta' subunit thereby facilitating its interaction with the beta and alpha subunits. This Limosilactobacillus reuteri (strain DSM 20016) (Lactobacillus reuteri) protein is DNA-directed RNA polymerase subunit omega.